A 160-amino-acid chain; its full sequence is MNIEIYTDGACSKNPGPGGWAYIMVNKDSKEEICRENGGEKSTTNNRMELMAVIRALKKIKEGAASLADKSGKALDYKSISVHTDSQYVQQGISSWIFNWKKNNWKTASKQPVKNQDLWQELDSLSASIKPEWIWVKGHAGNPLNEACDRLAVEACQKMM.

The RNase H type-1 domain occupies 1 to 157; it reads MNIEIYTDGA…CDRLAVEACQ (157 aa). Mg(2+) is bound by residues Asp-8, Glu-49, Asp-85, and Asp-149.

This sequence belongs to the RNase H family. In terms of assembly, monomer. Mg(2+) serves as cofactor.

The protein resides in the cytoplasm. It carries out the reaction Endonucleolytic cleavage to 5'-phosphomonoester.. Its function is as follows. Endonuclease that specifically degrades the RNA of RNA-DNA hybrids. This chain is Ribonuclease H, found in Treponema denticola (strain ATCC 35405 / DSM 14222 / CIP 103919 / JCM 8153 / KCTC 15104).